Here is a 333-residue protein sequence, read N- to C-terminus: Mitochondrial thiamine pyrophosphate carrier 1 (333 aa).

3 Solcar repeats span residues Gly12–Phe115, Pro129–Arg215, and Pro222–Leu318. 6 consecutive transmembrane segments (helical) span residues Val17–Leu35, Leu96–Ile112, Phe135–Leu155, Gly190–Tyr209, Leu221–Ala238, and Gly293–Trp310.

The protein belongs to the mitochondrial carrier (TC 2.A.29) family.

The protein resides in the mitochondrion inner membrane. Functionally, mitochondrial transporter that mediates uptake of thiamine pyrophosphate (ThPP) into mitochondria. This is Mitochondrial thiamine pyrophosphate carrier 1 (tpc-1) from Neurospora crassa (strain ATCC 24698 / 74-OR23-1A / CBS 708.71 / DSM 1257 / FGSC 987).